Reading from the N-terminus, the 134-residue chain is Arsenate reductase (134 aa).

Catalysis depends on nucleophile residues cysteine 11, cysteine 83, and cysteine 90. 2 disulfides stabilise this stretch: cysteine 11-cysteine 83 and cysteine 83-cysteine 90.

The protein belongs to the low molecular weight phosphotyrosine protein phosphatase family. Thioredoxin-coupled ArsC subfamily.

The protein localises to the cytoplasm. It carries out the reaction arsenate + [thioredoxin]-dithiol + H(+) = arsenite + [thioredoxin]-disulfide + H2O. In terms of biological role, catalyzes the reduction of arsenate [As(V)] to arsenite [As(III)]. In Bacillus cereus (strain G9842), this protein is Arsenate reductase.